A 99-amino-acid chain; its full sequence is Ubiquitin-related modifier 1 homolog (99 aa).

G99 is modified (1-thioglycine). G99 is covalently cross-linked (Glycyl lysine isopeptide (Gly-Lys) (interchain with K-? in acceptor proteins)).

The protein belongs to the URM1 family. C-terminal thiocarboxylation occurs in 2 steps, it is first acyl-adenylated (-COAMP) via the hesA/moeB/thiF part of the MOCS3 homolog, then thiocarboxylated (-COSH) via the rhodanese domain of the MOCS3 homolog.

It localises to the cytoplasm. It participates in tRNA modification; 5-methoxycarbonylmethyl-2-thiouridine-tRNA biosynthesis. In terms of biological role, acts as a sulfur carrier required for 2-thiolation of mcm(5)S(2)U at tRNA wobble positions of cytosolic tRNA(Lys), tRNA(Glu) and tRNA(Gln). Serves as sulfur donor in tRNA 2-thiolation reaction by being thiocarboxylated (-COSH) at its C-terminus by MOCS3. The sulfur is then transferred to tRNA to form 2-thiolation of mcm(5)S(2)U. Also acts as a ubiquitin-like protein (UBL) that is covalently conjugated via an isopeptide bond to lysine residues of target proteins. The thiocarboxylated form serves as substrate for conjugation and oxidative stress specifically induces the formation of UBL-protein conjugates. This Chlamydomonas reinhardtii (Chlamydomonas smithii) protein is Ubiquitin-related modifier 1 homolog.